The primary structure comprises 346 residues: S-adenosylmethionine:tRNA ribosyltransferase-isomerase (346 aa).

This sequence belongs to the QueA family. As to quaternary structure, monomer.

Its subcellular location is the cytoplasm. The catalysed reaction is 7-aminomethyl-7-carbaguanosine(34) in tRNA + S-adenosyl-L-methionine = epoxyqueuosine(34) in tRNA + adenine + L-methionine + 2 H(+). It functions in the pathway tRNA modification; tRNA-queuosine biosynthesis. Its function is as follows. Transfers and isomerizes the ribose moiety from AdoMet to the 7-aminomethyl group of 7-deazaguanine (preQ1-tRNA) to give epoxyqueuosine (oQ-tRNA). The protein is S-adenosylmethionine:tRNA ribosyltransferase-isomerase of Neisseria meningitidis serogroup C (strain 053442).